The primary structure comprises 1367 residues: Mediator of RNA polymerase II transcription subunit 23 (1367 aa).

Residues 1343-1367 (PPQALSSGSPAPQANQVPTALPVTQ) form a disordered region. Residues 1346–1367 (ALSSGSPAPQANQVPTALPVTQ) show a composition bias toward polar residues.

The protein belongs to the Mediator complex subunit 23 family. As to quaternary structure, component of the Mediator complex, which is composed of MED1, MED4, MED6, MED7, MED8, MED9, MED10, MED11, MED12, MED13, MED13L, MED14, MED15, MED16, MED17, MED18, MED19, MED20, MED21, MED22, MED23, MED24, MED25, MED26, MED27, MED29, MED30, MED31, CCNC, CDK8 and CDC2L6/CDK11. The MED12, MED13, CCNC and CDK8 subunits form a distinct module termed the CDK8 module. Mediator containing the CDK8 module is less active than Mediator lacking this module in supporting transcriptional activation. Individual preparations of the Mediator complex lacking one or more distinct subunits have been variously termed ARC, CRSP, DRIP, PC2, SMCC and TRAP. Interacts with CDK8, CEBPB, CTNNB1, ELK1 and GLI3. Interacts with the adenovirus E1A protein.

The protein localises to the nucleus. Its function is as follows. Component of the Mediator complex, a coactivator involved in the regulated transcription of nearly all RNA polymerase II-dependent genes. Mediator functions as a bridge to convey information from gene-specific regulatory proteins to the basal RNA polymerase II transcription machinery. Mediator is recruited to promoters by direct interactions with regulatory proteins and serves as a scaffold for the assembly of a functional pre-initiation complex with RNA polymerase II and the general transcription factors. Also required for transcriptional activation subsequent to the assembly of the pre-initiation complex. Required for transcriptional activation by adenovirus E1A protein. Required for ELK1-dependent transcriptional activation in response to activated Ras signaling. In Rattus norvegicus (Rat), this protein is Mediator of RNA polymerase II transcription subunit 23 (Med23).